A 476-amino-acid chain; its full sequence is Serine protease HTRA1B (476 aa).

Positions 1–19 (MRLLILCASIILVPLLCDA) are cleaved as a signal peptide. In terms of domain architecture, IGFBP N-terminal spans 25–109 (YVIGCPERCD…RGKTGVCVCK (85 aa)). 6 cysteine pairs are disulfide-bonded: C29/C54, C33/C56, C38/C57, C45/C60, C68/C85, and C79/C106. Residues 94–153 (TTTVRRRGKTGVCVCKSSEPVCGSDGVSYRNICELKRVSNRAQKLQQPPIIFIQRGACGK) form the Kazal-like domain. The tract at residues 200–360 (GSGFVVSEDG…IPSDKIRQFL (161 aa)) is serine protease. Active-site charge relay system residues include H216, D246, and S324. The region spanning 361–463 (AESHDRQAKG…LRAVVRRGNE (103 aa)) is the PDZ domain.

The protein belongs to the peptidase S1C family. As to quaternary structure, forms homotrimers. In the presence of substrate, may form higher-order multimers in a PDZ-independent manner.

It localises to the secreted. The protein resides in the cytoplasm. Its subcellular location is the cytosol. In terms of biological role, serine protease with a variety of targets, including extracellular matrix proteins and proteoglycans. Through cleavage of proteoglycans, may release soluble FGF-glycosaminoglycan complexes that promote the range and intensity of FGF signals in the extracellular space. Regulates the availability of insulin-like growth factors (IGFs) by cleaving IGF-binding proteins. Inhibits signaling mediated by TGF-beta family members. Consequently, may regulate many physiological processes. Intracellularly, degrades TSC2, leading to the activation of TSC2 downstream targets. This is Serine protease HTRA1B (htra1b) from Danio rerio (Zebrafish).